A 224-amino-acid polypeptide reads, in one-letter code: MQPIEGIVFDLYGTLYDVHSVVQACESAYPGQGEAISRLWRQKQLEYTWLSSLMGRYASFEQRTEEALRYTCKHLGLATDETTLRQLGQAYLHLAPHPDTTAALRRLKASGLPMAIASNGSHHSIEQVVSHSDMGWAFDHLISVETVKVFKPDNRVYSLAEQTMAIPRDRLLFVSSNSWDATGARHFGFPVCWVNRQGAVFDELGATPTREVRDLGEMSDWLLD.

Catalysis depends on aspartate 10, which acts as the Nucleophile. Residues 11–12 (LY), arginine 41, and 118–119 (SN) contribute to the an (S)-2-haloacid site. Residues 175 to 180 (SSNSWD) form an important for catalytic activity region.

The protein belongs to the HAD-like hydrolase superfamily. S-2-haloalkanoic acid dehalogenase family.

The catalysed reaction is an (S)-2-haloacid + H2O = a (2R)-2-hydroxycarboxylate + a halide anion + H(+). It carries out the reaction (S)-2-chloropropanoate + H2O = (R)-lactate + chloride + H(+). In terms of biological role, catalyzes the hydrolytic dehalogenation of small (S)-2-haloalkanoic acids to yield the corresponding (R)-2-hydroxyalkanoic acids. Acts on acids of short chain lengths, C(2) to C(4), with inversion of configuration at C-2. Active with 2-halogenated carboxylic acids and converts only the S-isomer (or L-isomer) of 2-chloropropionic acid with inversion of configuration to produce R-lactate (or D-isomer). The sequence is that of (S)-2-haloacid dehalogenase H-109 from Pseudomonas putida (Arthrobacter siderocapsulatus).